Here is a 115-residue protein sequence, read N- to C-terminus: uncharacterized protein (115 aa).

Transmembrane regions (helical) follow at residues 1–21 (MFLAGVLCMCAAAASALFGSW), 33–53 (ALALRAMAPTQLAAAVMLAAG), and 54–74 (GVVAVAAPGHTALMVVIVCIA).

To M.leprae ML0030.

It localises to the cell membrane. This is an uncharacterized protein from Mycobacterium tuberculosis (strain CDC 1551 / Oshkosh).